Consider the following 620-residue polypeptide: Notoamide biosynthesis transcriptional activator notL' (620 aa).

A disordered region spans residues 1 to 26 (MPPSSKSRRLPPAASDSAASDAQKRR). Residues 33-59 (CSACKARKLKCTGAPPCANCVKSRIEC) constitute a DNA-binding region (zn(2)-C6 fungal-type). The interval 591–620 (ETGAFFLDPDQPSGNSTPIKSETPEGTAIS) is disordered.

The protein resides in the nucleus. Functionally, transcription factor that probably regulates the expression of the gene cluster that mediates the biosynthesis of notoamide, a fungal indole alkaloid that belongs to a family of natural products containing a characteristic bicyclo[2.2.2]diazaoctane core. This Aspergillus versicolor protein is Notoamide biosynthesis transcriptional activator notL'.